The following is an 87-amino-acid chain: Small ribosomal subunit protein bS20 (87 aa).

A compositionally biased stretch (basic residues) spans 1–27 (MANIKSAKKRALQSERRRQHNASRRSM). Positions 1-31 (MANIKSAKKRALQSERRRQHNASRRSMTRTS) are disordered.

Belongs to the bacterial ribosomal protein bS20 family.

Binds directly to 16S ribosomal RNA. This Pseudoalteromonas atlantica (strain T6c / ATCC BAA-1087) protein is Small ribosomal subunit protein bS20.